We begin with the raw amino-acid sequence, 584 residues long: Interferon regulatory factor 2-binding protein 1 (584 aa).

A disordered region spans residues 60–127; sequence VLPEGRSPGP…SGRLPLPSPA (68 aa). Phosphoserine occurs at positions 66 and 125. An Omega-N-methylarginine modification is found at Arg177. Ser186 is modified (phosphoserine). Residues 197–217 adopt a coiled-coil conformation; the sequence is EKEKQQRNADCLAELNEAMRG. Lys227 is covalently cross-linked (Glycyl lysine isopeptide (Lys-Gly) (interchain with G-Cter in SUMO2)). Residues 346-420 form a disordered region; the sequence is PAEALPQQYP…PYSAETPGVP (75 aa). Residues 354–369 are compositionally biased toward pro residues; the sequence is YPEPAPAALCGPPPRA. 4 positions are modified to phosphoserine: Ser371, Ser384, Ser421, and Ser436. The interval 433 to 495 is disordered; that stretch reads LGHSPKDPGG…VSGGGSGTGA (63 aa). Residue Lys438 forms a Glycyl lysine isopeptide (Lys-Gly) (interchain with G-Cter in SUMO2) linkage. Residues 449 to 463 show a composition bias toward low complexity; sequence AGGASPAASSTAQPP. Ser453 and Ser457 each carry phosphoserine. The RING-type; degenerate zinc finger occupies 503 to 550; the sequence is CTLCRERLEDTHFVQCPSVPGHKFCFPCSREFIKAQGPAGEVYCPSGD. A cys-rich region spans residues 503–550; the sequence is CTLCRERLEDTHFVQCPSVPGHKFCFPCSREFIKAQGPAGEVYCPSGD.

The protein belongs to the IRF2BP family. In terms of assembly, interacts with IRF2. Part of a corepressor complex containing IRF2 and IRF2BP2. Interacts with JDP2.

It is found in the nucleus. The catalysed reaction is S-ubiquitinyl-[E2 ubiquitin-conjugating enzyme]-L-cysteine + [acceptor protein]-L-lysine = [E2 ubiquitin-conjugating enzyme]-L-cysteine + N(6)-ubiquitinyl-[acceptor protein]-L-lysine.. Functionally, acts as a transcriptional corepressor in a IRF2-dependent manner; this repression is not mediated by histone deacetylase activities. May act as an E3 ligase towards JDP2, enhancing its polyubiquitination. Represses ATF2-dependent transcriptional activation. The polypeptide is Interferon regulatory factor 2-binding protein 1 (IRF2BP1) (Homo sapiens (Human)).